Reading from the N-terminus, the 70-residue chain is Large ribosomal subunit protein bL31 (70 aa).

Residues Cys-16, Cys-18, Cys-37, and Cys-40 each contribute to the Zn(2+) site. The disordered stretch occupies residues 48–70 (QRQASSGGRVDKFNKRFGALGSK).

This sequence belongs to the bacterial ribosomal protein bL31 family. Type A subfamily. Part of the 50S ribosomal subunit. Zn(2+) serves as cofactor.

In terms of biological role, binds the 23S rRNA. The chain is Large ribosomal subunit protein bL31 from Photobacterium profundum (strain SS9).